The chain runs to 234 residues: 3-deoxy-manno-octulosonate cytidylyltransferase (234 aa).

Belongs to the KdsB family.

The protein localises to the cytoplasm. The catalysed reaction is 3-deoxy-alpha-D-manno-oct-2-ulosonate + CTP = CMP-3-deoxy-beta-D-manno-octulosonate + diphosphate. The protein operates within nucleotide-sugar biosynthesis; CMP-3-deoxy-D-manno-octulosonate biosynthesis; CMP-3-deoxy-D-manno-octulosonate from 3-deoxy-D-manno-octulosonate and CTP: step 1/1. It functions in the pathway bacterial outer membrane biogenesis; lipopolysaccharide biosynthesis. Functionally, activates KDO (a required 8-carbon sugar) for incorporation into bacterial lipopolysaccharide in Gram-negative bacteria. The polypeptide is 3-deoxy-manno-octulosonate cytidylyltransferase (Aquifex aeolicus (strain VF5)).